Here is a 429-residue protein sequence, read N- to C-terminus: Protein phosphatase 2C homolog 2 (429 aa).

In terms of domain architecture, PPM-type phosphatase spans L16–L291. Residues D64, G65, D233, and D282 each contribute to the Mn(2+) site. Disordered regions lie at residues Y320–S348 and R384–S429. Residues R384 to E397 show a composition bias toward basic and acidic residues. Residues S405–G419 show a composition bias toward low complexity.

This sequence belongs to the PP2C family. The cofactor is Mg(2+). Requires Mn(2+) as cofactor.

The protein localises to the cytoplasm. It localises to the nucleus. The catalysed reaction is O-phospho-L-seryl-[protein] + H2O = L-seryl-[protein] + phosphate. It carries out the reaction O-phospho-L-threonyl-[protein] + H2O = L-threonyl-[protein] + phosphate. Functionally, dephosphorylating regulator for many key proteins. Dephosphorylates sakA, to negatively regulate the stress-activated p38MAPK cascade. This Aspergillus fumigatus (strain ATCC MYA-4609 / CBS 101355 / FGSC A1100 / Af293) (Neosartorya fumigata) protein is Protein phosphatase 2C homolog 2.